A 230-amino-acid chain; its full sequence is A-type ATP synthase subunit D (230 aa).

A disordered region spans residues 204-230; that stretch reads AKKEEEEDALAAEEEAEEEPEAVTADD. A compositionally biased stretch (acidic residues) spans 208–230; the sequence is EEEDALAAEEEAEEEPEAVTADD.

Belongs to the V-ATPase D subunit family. As to quaternary structure, has multiple subunits with at least A(3), B(3), C, D, E, F, H, I and proteolipid K(x).

Its subcellular location is the cell membrane. Component of the A-type ATP synthase that produces ATP from ADP in the presence of a proton gradient across the membrane. The chain is A-type ATP synthase subunit D from Haloarcula marismortui (strain ATCC 43049 / DSM 3752 / JCM 8966 / VKM B-1809) (Halobacterium marismortui).